The primary structure comprises 109 residues: N-cym protein (109 aa).

As to quaternary structure, interacts with MYCN and GSK3B. As to expression, expressed in the neuronal cells of the cerebrum and cerebellum, spermatocytes of the testis, pancreatic cells and also the heart. Expressed in both primary and metastatic neuroblastomas and in thyroid tumors (at protein level). Expression is associated with poor prognosis in neuroblastoma. Expressed in the fetal brain, lung, liver and kidney at varying low levels.

The protein localises to the cytoplasm. The protein resides in the nucleus. Regulates stability of MYCN in neuroblastoma cells by inhibiting GSK3B-mediated MYCN phosphorylation. Inhibits GSK3B activity by promoting its phosphorylation at 'Ser-9'. This Homo sapiens (Human) protein is N-cym protein (MYCNOS).